We begin with the raw amino-acid sequence, 268 residues long: Hydroxyethylthiazole kinase (268 aa).

Position 45 (Met45) interacts with substrate. ATP is bound by residues Arg121 and Thr167. Residue Gly194 participates in substrate binding.

The protein belongs to the Thz kinase family. Mg(2+) serves as cofactor.

The enzyme catalyses 5-(2-hydroxyethyl)-4-methylthiazole + ATP = 4-methyl-5-(2-phosphooxyethyl)-thiazole + ADP + H(+). It functions in the pathway cofactor biosynthesis; thiamine diphosphate biosynthesis; 4-methyl-5-(2-phosphoethyl)-thiazole from 5-(2-hydroxyethyl)-4-methylthiazole: step 1/1. Its function is as follows. Catalyzes the phosphorylation of the hydroxyl group of 4-methyl-5-beta-hydroxyethylthiazole (THZ). The chain is Hydroxyethylthiazole kinase from Bacillus cereus (strain Q1).